Consider the following 280-residue polypeptide: Large ribosomal subunit protein uL2 (280 aa).

Disordered regions lie at residues Ser-27–His-58 and Met-226–Arg-280. Composition is skewed to basic residues over residues Leu-37–His-58 and Ile-268–Arg-280.

Belongs to the universal ribosomal protein uL2 family. Part of the 50S ribosomal subunit. Forms a bridge to the 30S subunit in the 70S ribosome.

Functionally, one of the primary rRNA binding proteins. Required for association of the 30S and 50S subunits to form the 70S ribosome, for tRNA binding and peptide bond formation. It has been suggested to have peptidyltransferase activity; this is somewhat controversial. Makes several contacts with the 16S rRNA in the 70S ribosome. This is Large ribosomal subunit protein uL2 from Mycobacterium marinum (strain ATCC BAA-535 / M).